The following is a 198-amino-acid chain: Probable chemoreceptor glutamine deamidase CheD (198 aa).

It belongs to the CheD family.

The catalysed reaction is L-glutaminyl-[protein] + H2O = L-glutamyl-[protein] + NH4(+). Its function is as follows. Probably deamidates glutamine residues to glutamate on methyl-accepting chemotaxis receptors (MCPs), playing an important role in chemotaxis. This chain is Probable chemoreceptor glutamine deamidase CheD, found in Xanthomonas axonopodis pv. citri (strain 306).